We begin with the raw amino-acid sequence, 346 residues long: Putative [LysW]-L-2-aminoadipate/[LysW]-L-glutamate phosphate reductase (346 aa).

12–15 (SGFT) provides a ligand contact to NADP(+). The active site involves cysteine 147. Asparagine 310 is a binding site for NADP(+).

This sequence belongs to the NAGSA dehydrogenase family. Type 1 subfamily. LysY sub-subfamily.

The protein resides in the cytoplasm. It catalyses the reaction [amino-group carrier protein]-C-terminal-N-(1-carboxy-5-oxopentan-1-yl)-L-glutamine + phosphate + NADP(+) = [amino-group carrier protein]-C-terminal-N-(1-carboxy-5-phosphooxy-5-oxopentan-1-yl)-L-glutamine + NADPH + H(+). It carries out the reaction [amino-group carrier protein]-C-terminal-gamma-(L-glutamyl-5-semialdehyde)-L-glutamate + phosphate + NADP(+) = [amino-group carrier protein]-C-terminal-gamma-(5-phospho-L-glutamyl)-L-glutamate + NADPH + H(+). It functions in the pathway amino-acid biosynthesis; L-lysine biosynthesis via AAA pathway; L-lysine from L-alpha-aminoadipate (Thermus route): step 3/5. Its pathway is amino-acid biosynthesis; L-arginine biosynthesis. In terms of biological role, involved in both the arginine and lysine biosynthetic pathways. The chain is Putative [LysW]-L-2-aminoadipate/[LysW]-L-glutamate phosphate reductase from Natronomonas pharaonis (strain ATCC 35678 / DSM 2160 / CIP 103997 / JCM 8858 / NBRC 14720 / NCIMB 2260 / Gabara) (Halobacterium pharaonis).